We begin with the raw amino-acid sequence, 125 residues long: Large ribosomal subunit protein uL18 (125 aa).

Position 2 is an N-acetylglycine (G2). N6-acetyllysine occurs at positions 5 and 48.

The protein belongs to the universal ribosomal protein uL18 family. Component of the large ribosomal subunit (LSU). Part of the 5S RNP complex, which is a LSU subcomplex composed of the 5S RNA, RPL5 and RPL11. Component of a hexameric 5S RNP precursor complex, composed of 5S RNA, RRS1, RPF2/BXDC1, RPL5, RPL11 and HEATR3; this complex acts as a precursor for ribosome assembly. Interacts with NVL in an ATP-dependent manner. Interacts with RRP1B. Interacts with IPO5, IPO7 and KPNB1; these interactions may be involved in RPL5 nuclear import for the assembly of ribosomal subunits. Interacts with RRP1B.

The protein resides in the cytoplasm. The protein localises to the nucleus. Its subcellular location is the nucleolus. Its function is as follows. Component of the ribosome, a large ribonucleoprotein complex responsible for the synthesis of proteins in the cell. The small ribosomal subunit (SSU) binds messenger RNAs (mRNAs) and translates the encoded message by selecting cognate aminoacyl-transfer RNA (tRNA) molecules. The large subunit (LSU) contains the ribosomal catalytic site termed the peptidyl transferase center (PTC), which catalyzes the formation of peptide bonds, thereby polymerizing the amino acids delivered by tRNAs into a polypeptide chain. The nascent polypeptides leave the ribosome through a tunnel in the LSU and interact with protein factors that function in enzymatic processing, targeting, and the membrane insertion of nascent chains at the exit of the ribosomal tunnel. As part of the 5S RNP/5S ribonucleoprotein particle it is an essential component of the LSU, required for its formation and the maturation of rRNAs. It also couples ribosome biogenesis to p53/TP53 activation. As part of the 5S RNP it accumulates in the nucleoplasm and inhibits MDM2, when ribosome biogenesis is perturbed, mediating the stabilization and the activation of TP53. The polypeptide is Large ribosomal subunit protein uL18 (RPL5) (Sus scrofa (Pig)).